Here is a 583-residue protein sequence, read N- to C-terminus: RuBisCO large subunit-binding protein subunit alpha, chloroplastic (583 aa).

Over residues 1 to 14 (MATANALSSPSVLC) the composition is skewed to polar residues. Residues 1 to 35 (MATANALSSPSVLCSSRQGKLSGGSQQKGQRVSYR) form a disordered region. A chloroplast-targeting transit peptide spans 1 to 45 (MATANALSSPSVLCSSRQGKLSGGSQQKGQRVSYRKANRRFSLRA). Low complexity predominate over residues 15 to 31 (SSRQGKLSGGSQQKGQR). Phosphoserine is present on serine 89.

Belongs to the chaperonin (HSP60) family. As to quaternary structure, oligomer of probably six alpha and six beta subunits.

The protein localises to the plastid. Its subcellular location is the chloroplast. This protein binds RuBisCO small and large subunits and is implicated in the assembly of the enzyme oligomer. The polypeptide is RuBisCO large subunit-binding protein subunit alpha, chloroplastic (Brassica napus (Rape)).